The primary structure comprises 366 residues: Protein disulfide isomerase-like 2-1 (366 aa).

Residues 1 to 29 (MATPQISRKALASLLLLVAAAAAVSTASA) form the signal peptide. 2 Thioredoxin domains span residues 30–138 (DDVL…SEAA) and 139–257 (TNVK…EKCG). Catalysis depends on nucleophile residues cysteine 59, cysteine 62, cysteine 178, and cysteine 181. Cystine bridges form between cysteine 59/cysteine 62 and cysteine 178/cysteine 181.

This sequence belongs to the protein disulfide isomerase family.

The protein resides in the secreted. The catalysed reaction is Catalyzes the rearrangement of -S-S- bonds in proteins.. Acts as a protein-folding catalyst that interacts with nascent polypeptides to catalyze the formation, isomerization, and reduction or oxidation of disulfide bonds. May play a role in storage protein biogenesis. This is Protein disulfide isomerase-like 2-1 (PDIL2-1) from Oryza sativa subsp. japonica (Rice).